Consider the following 347-residue polypeptide: Selenide, water dikinase (347 aa).

The active site involves cysteine 17. Residues lysine 20 and 48 to 50 (TRD) each bind ATP. Mg(2+) is bound at residue aspartate 51. ATP contacts are provided by residues aspartate 68, aspartate 91, and 139 to 141 (GHS). A Mg(2+)-binding site is contributed by aspartate 91. Aspartate 227 is a Mg(2+) binding site.

It belongs to the selenophosphate synthase 1 family. Class I subfamily. In terms of assembly, homodimer. Mg(2+) is required as a cofactor.

The enzyme catalyses hydrogenselenide + ATP + H2O = selenophosphate + AMP + phosphate + 2 H(+). In terms of biological role, synthesizes selenophosphate from selenide and ATP. The polypeptide is Selenide, water dikinase (Enterobacter sp. (strain 638)).